A 556-amino-acid chain; its full sequence is CDP-diacylglycerol--glycerol-3-phosphate 3-phosphatidyltransferase, mitochondrial (556 aa).

The N-terminal 28 residues, methionine 1–alanine 28, are a transit peptide targeting the mitochondrion. Residue serine 49 is modified to Phosphoserine. Residue alanine 124–glycine 131 coordinates ATP. 2 consecutive PLD phosphodiesterase domains span residues threonine 215–tyrosine 241 and phenylalanine 419–tyrosine 457. Active-site residues include histidine 220, lysine 222, and aspartate 227.

This sequence belongs to the CDP-alcohol phosphatidyltransferase class-II family.

Its subcellular location is the mitochondrion. The enzyme catalyses a CDP-1,2-diacyl-sn-glycerol + sn-glycerol 3-phosphate = a 1,2-diacyl-sn-glycero-3-phospho-(1'-sn-glycero-3'-phosphate) + CMP + H(+). It participates in phospholipid metabolism; phosphatidylglycerol biosynthesis; phosphatidylglycerol from CDP-diacylglycerol: step 1/2. Its activity is regulated as follows. Activated by calcium and magnesium and inhibited by other bivalent cations. Functions in the biosynthesis of the anionic phospholipids phosphatidylglycerol and cardiolipin. The polypeptide is CDP-diacylglycerol--glycerol-3-phosphate 3-phosphatidyltransferase, mitochondrial (PGS1) (Bos taurus (Bovine)).